The sequence spans 210 residues: tRNA (guanine-N(7)-)-methyltransferase (210 aa).

S-adenosyl-L-methionine contacts are provided by E36, E61, D90, and D112. D112 is an active-site residue. Substrate contacts are provided by residues K116, D148, and 188–191 (TEYE).

The protein belongs to the class I-like SAM-binding methyltransferase superfamily. TrmB family.

The enzyme catalyses guanosine(46) in tRNA + S-adenosyl-L-methionine = N(7)-methylguanosine(46) in tRNA + S-adenosyl-L-homocysteine. Its pathway is tRNA modification; N(7)-methylguanine-tRNA biosynthesis. Functionally, catalyzes the formation of N(7)-methylguanine at position 46 (m7G46) in tRNA. In Mycoplasma pneumoniae (strain ATCC 29342 / M129 / Subtype 1) (Mycoplasmoides pneumoniae), this protein is tRNA (guanine-N(7)-)-methyltransferase.